Here is a 243-residue protein sequence, read N- to C-terminus: Large ribosomal subunit protein uL3 (243 aa).

Disordered stretches follow at residues 139–164 (VSHR…KMPG) and 218–243 (KPGK…QEGV). Gln151 bears the N5-methylglutamine mark. The span at 231-243 (QTAAAPAAEQEGV) shows a compositional bias: low complexity.

This sequence belongs to the universal ribosomal protein uL3 family. In terms of assembly, part of the 50S ribosomal subunit. Forms a cluster with proteins L14 and L19. Methylated by PrmB.

One of the primary rRNA binding proteins, it binds directly near the 3'-end of the 23S rRNA, where it nucleates assembly of the 50S subunit. The sequence is that of Large ribosomal subunit protein uL3 from Rhodopseudomonas palustris (strain BisB18).